We begin with the raw amino-acid sequence, 155 residues long: Cytochrome c-type biogenesis protein CcmE (155 aa).

The Cytoplasmic segment spans residues 1-8; the sequence is MNPRRKKR. Residues 9–29 traverse the membrane as a helical; Signal-anchor for type II membrane protein segment; that stretch reads LLITSLLAVALSLAVGLVLFA. Topologically, residues 30–155 are periplasmic; it reads LQQNIDLFYT…GMDNFKANNK (126 aa). 2 residues coordinate heme: His-131 and Tyr-135.

The protein belongs to the CcmE/CycJ family.

Its subcellular location is the cell inner membrane. In terms of biological role, heme chaperone required for the biogenesis of c-type cytochromes. Transiently binds heme delivered by CcmC and transfers the heme to apo-cytochromes in a process facilitated by CcmF and CcmH. The polypeptide is Cytochrome c-type biogenesis protein CcmE (Psychromonas ingrahamii (strain DSM 17664 / CCUG 51855 / 37)).